We begin with the raw amino-acid sequence, 257 residues long: Type III pantothenate kinase (257 aa).

Residue 24–31 (MIGNSRLH) participates in ATP binding. Substrate contacts are provided by residues Tyr96 and 100-103 (GIDR). The Proton acceptor role is filled by Asp102. A K(+)-binding site is contributed by Asp122. Thr125 provides a ligand contact to ATP. Thr180 contributes to the substrate binding site.

Belongs to the type III pantothenate kinase family. In terms of assembly, homodimer. It depends on NH4(+) as a cofactor. Requires K(+) as cofactor.

Its subcellular location is the cytoplasm. It catalyses the reaction (R)-pantothenate + ATP = (R)-4'-phosphopantothenate + ADP + H(+). Its pathway is cofactor biosynthesis; coenzyme A biosynthesis; CoA from (R)-pantothenate: step 1/5. In terms of biological role, catalyzes the phosphorylation of pantothenate (Pan), the first step in CoA biosynthesis. This Synechocystis sp. (strain ATCC 27184 / PCC 6803 / Kazusa) protein is Type III pantothenate kinase.